Reading from the N-terminus, the 711-residue chain is Dendrin (711 aa).

Disordered regions lie at residues 1-22, 49-273, 324-446, and 479-677; these read MLDG…DEES, APSR…KKRL, DLNS…SQGL, and PSGV…AELS. Positions 75 to 84 are enriched in pro residues; sequence PGSPQPPPRR. Positions 102–134 form a coiled coil; the sequence is LAEVRAREQEKRKAASQEREAKETERKRRKAGG. Residues 105 to 127 are compositionally biased toward basic and acidic residues; that stretch reads VRAREQEKRKAASQEREAKETER. The nuclear localization stretch occupies residues 113-131; that stretch reads RKAASQEREAKETERKRRK. Positions 150–161 are enriched in low complexity; it reads APRVAQLAGLPA. The tract at residues 186–236 is interaction with MAGI2; sequence GSAWAGPWGGRRPGPPSYEAHLLLRGSAGTAPRRRWDRPPPYVAPPSYEGP. 2 stretches are compositionally biased toward low complexity: residues 252 to 262 and 346 to 356; these read PTSSAPAATPA and APAGSATAAPC. The segment at 341–436 is interaction with ACTN1; the sequence is AGTEIAPAGS…LEGWKATRRA (96 aa). S389 is subject to Phosphoserine. Residues 408 to 709 are interaction with CD2AP and NPHS1; the sequence is GGTGWRESLG…IRGTQQGNRK (302 aa). A compositionally biased stretch (basic and acidic residues) spans 529–546; that stretch reads GEAEGGRPGDSTLEERTF.

As to quaternary structure, forms a ternary complex with MAGI2 and SH3KBP1; recruits DDN to the cytoplasm. Interacts with MAGI1. Interacts with ACTN1 and may interact with WWC1. Interacts with the podocyte slit diaphragm proteins CD2AP, NPHS1 and NPHS2; the interaction with CD2AP and NPHS1 is direct. Specifically expressed in brain and kidney. Expressed in kidney glomerular capillary loops (at protein level).

It is found in the cell projection. It localises to the dendritic spine membrane. The protein resides in the cytoplasm. Its subcellular location is the endoplasmic reticulum membrane. The protein localises to the perikaryon. It is found in the nucleus. Promotes apoptosis of kidney glomerular podocytes. Podocytes are highly specialized cells essential to the ultrafiltration of blood, resulting in the extraction of urine and the retention of protein. The polypeptide is Dendrin (DDN) (Homo sapiens (Human)).